A 347-amino-acid chain; its full sequence is Heat-inducible transcription repressor HrcA (347 aa).

It belongs to the HrcA family.

Functionally, negative regulator of class I heat shock genes (grpE-dnaK-dnaJ and groELS operons). Prevents heat-shock induction of these operons. The sequence is that of Heat-inducible transcription repressor HrcA from Mycoplasmopsis pulmonis (strain UAB CTIP) (Mycoplasma pulmonis).